Here is a 79-residue protein sequence, read N- to C-terminus: Acyl carrier protein (79 aa).

The 76-residue stretch at 2-77 (SDVAERVKKI…DAVNFLEKAT (76 aa)) folds into the Carrier domain. S37 bears the O-(pantetheine 4'-phosphoryl)serine mark.

This sequence belongs to the acyl carrier protein (ACP) family. In terms of processing, 4'-phosphopantetheine is transferred from CoA to a specific serine of apo-ACP by AcpS. This modification is essential for activity because fatty acids are bound in thioester linkage to the sulfhydryl of the prosthetic group.

It localises to the cytoplasm. Its pathway is lipid metabolism; fatty acid biosynthesis. Its function is as follows. Carrier of the growing fatty acid chain in fatty acid biosynthesis. This chain is Acyl carrier protein, found in Methylocella silvestris (strain DSM 15510 / CIP 108128 / LMG 27833 / NCIMB 13906 / BL2).